A 139-amino-acid polypeptide reads, in one-letter code: uncharacterized protein (139 aa).

Residues 54–75 form a disordered region; the sequence is NSLHRHGDQAWGKHRRQNSLKS.

This is an uncharacterized protein from Homo sapiens (Human).